Consider the following 126-residue polypeptide: Probable glycine cleavage system H protein (126 aa).

The region spanning 24 to 106 is the Lipoyl-binding domain; it reads VVRVGITDFA…FGDGWLLEVE (83 aa). Lys-65 is subject to N6-lipoyllysine.

Belongs to the GcvH family. In terms of assembly, the glycine cleavage system is composed of four proteins: P, T, L and H. (R)-lipoate serves as cofactor.

Its function is as follows. The glycine cleavage system catalyzes the degradation of glycine. The H protein shuttles the methylamine group of glycine from the P protein to the T protein. The sequence is that of Probable glycine cleavage system H protein from Natronomonas pharaonis (strain ATCC 35678 / DSM 2160 / CIP 103997 / JCM 8858 / NBRC 14720 / NCIMB 2260 / Gabara) (Halobacterium pharaonis).